We begin with the raw amino-acid sequence, 130 residues long: Small ribosomal subunit protein uS9 (130 aa).

This sequence belongs to the universal ribosomal protein uS9 family.

In Vibrio atlanticus (strain LGP32) (Vibrio splendidus (strain Mel32)), this protein is Small ribosomal subunit protein uS9.